We begin with the raw amino-acid sequence, 618 residues long: Mitochondrial Rho GTPase 1 (618 aa).

Topologically, residues Met-1 to Phe-592 are cytoplasmic. The Miro 1 domain maps to Lys-2–His-168. Arg-14, Gly-16, Lys-17, Thr-18, and Ser-19 together coordinate GTP. Mg(2+) is bound at residue Thr-18. Mg(2+) contacts are provided by Pro-35 and Asp-57. Ser-59 is a binding site for GTP. At Lys-92 the chain carries N6-acetyllysine. Positions 118, 119, 121, 149, and 150 each coordinate GTP. Lys-153 participates in a covalent cross-link: Glycyl lysine isopeptide (Lys-Gly) (interchain with G-Cter in ubiquitin). The 36-residue stretch at Ala-184–Thr-219 folds into the EF-hand 1 domain. Ca(2+) contacts are provided by Asp-197, Asp-199, Asp-201, Thr-203, and Glu-208. Lys-235 participates in a covalent cross-link: Glycyl lysine isopeptide (Lys-Gly) (interchain with G-Cter in ubiquitin). The 36-residue stretch at His-304–Ile-339 folds into the EF-hand 2 domain. Ca(2+) contacts are provided by Asp-317, Asp-319, Asp-321, Ala-323, and Glu-328. Residues Arg-416–Tyr-579 enclose the Miro 2 domain. The GTP site is built by Asn-428, Cys-429, Gly-430, Lys-431, Ser-432, Gly-433, and Lys-447. Residue Asn-428 coordinates Mg(2+). Positions 428, 429, 430, 431, 432, 433, 447, 454, 477, 478, 528, 530, 558, 559, and 560 each coordinate GDP. GTP contacts are provided by Lys-528, Asp-530, Thr-558, and Cys-559. Residue Lys-572 forms a Glycyl lysine isopeptide (Lys-Gly) (interchain with G-Cter in ubiquitin) linkage. Residues Trp-593–Leu-615 traverse the membrane as a helical; Anchor for type IV membrane protein segment. Residues Lys-616–Arg-618 are Mitochondrial intermembrane-facing.

The protein belongs to the mitochondrial Rho GTPase family. Homodimer. Interacts with the kinesin-binding proteins TRAK1/OIP106 and TRAK2/GRIF1, forming a link between mitochondria and the trafficking apparatus of the microtubules. Interacts with RAP1GDS1. Interacts with ARMCX1. Found in a complex with KIF5B, OGT, RHOT2 and TRAK1. In terms of processing, ubiquitinated by PRKN during mitophagy, leading to its degradation and enhancement of mitophagy. Deubiquitinated by USP30. Post-translationally, acetylation on Lys-92 decreases sensitivity of mitochondrial transport to elevated Ca(2+) levels, increases mitochondrial transport and promotes axon growth. Deacetylated by HDAC6 which blocks mitochondrial transport and mediates axon growth inhibition. As to expression, ubiquitously expressed. Expressed at high level in heart and skeletal muscle.

The protein resides in the mitochondrion outer membrane. The catalysed reaction is GTP + H2O = GDP + phosphate + H(+). It catalyses the reaction ATP + H2O = ADP + phosphate + H(+). The enzyme catalyses UTP + H2O = UDP + phosphate + H(+). In terms of biological role, atypical mitochondrial nucleoside-triphosphatase (NTPase) involved in mitochondrial trafficking. Probably involved in control of anterograde transport of mitochondria and their subcellular distribution. Promotes mitochondrial fission during high calcium conditions. Can hydrolyze GTP, ATP and UTP. In Homo sapiens (Human), this protein is Mitochondrial Rho GTPase 1 (RHOT1).